Consider the following 767-residue polypeptide: Serine/threonine-protein kinase DCLK2 (767 aa).

Positions 1–44 (MASTRSIELEHFEERDKRPRPGSRRGAPSSSGGSSISGPKGNGL) are disordered. The span at 7-19 (IELEHFEERDKRP) shows a compositional bias: basic and acidic residues. Over residues 24–43 (RRGAPSSSGGSSISGPKGNG) the composition is skewed to low complexity. Thr61 bears the Phosphothreonine mark. Doublecortin domains follow at residues 72–158 (KKAR…VDYT) and 196–279 (KLVT…AQDD). Residues 301-311 (KYSGSRSPGLS) show a composition bias toward low complexity. Residues 301-391 (KYSGSRSPGL…GPELDRCMSP (91 aa)) form a disordered region. The span at 327-338 (SAYSTAKSPVNG) shows a compositional bias: polar residues. Over residues 339–362 (TPSSQLSTPKSTKSSSSSPTSPGS) the composition is skewed to low complexity. Residues 369 to 380 (ISAQGRSSSNVN) are compositionally biased toward polar residues. Position 377 is a phosphoserine (Ser377). Positions 409-666 (YRIGKVIGDG…AGEILSHPWV (258 aa)) constitute a Protein kinase domain. ATP-binding positions include 415 to 423 (IGDGNFAVV) and Lys438. The Proton acceptor role is filled by Asp530. A Phosphoserine modification is found at Ser662. Thr681 carries the post-translational modification Phosphothreonine. The span at 721 to 734 (HCRDSSKSSREQTS) shows a compositional bias: basic and acidic residues. Positions 721 to 767 (HCRDSSKSSREQTSAREAPPPPESPRPPGPPATSGCDPAGTWRRHRD) are disordered. A compositionally biased stretch (pro residues) spans 738–751 (APPPPESPRPPGPP).

Belongs to the protein kinase superfamily. CAMK Ser/Thr protein kinase family. CaMK subfamily. In terms of assembly, interacts with MAPK8IP1/JIP-1, MAPK8IP2/JIP-2, MAPK9/JNK2, PPP1R9B/NEURABIN-2 and actin. Binds to and stabilizes microtubules; binding affinity is strongly reduced by autophosphorylation. In terms of processing, autophosphorylated.

The protein localises to the cytoplasm. Its subcellular location is the cytoskeleton. It catalyses the reaction L-seryl-[protein] + ATP = O-phospho-L-seryl-[protein] + ADP + H(+). The catalysed reaction is L-threonyl-[protein] + ATP = O-phospho-L-threonyl-[protein] + ADP + H(+). Protein kinase with a significantly reduced Ca(2+)+/CAM affinity and dependence compared to other members of the CaMK family. May play a role in the down-regulation of CRE-dependent gene activation probably by phosphorylation of the CREB coactivator CRTC2/TORC2 and the resulting retention of TORC2 in the cytoplasm. The chain is Serine/threonine-protein kinase DCLK2 (Dclk2) from Rattus norvegicus (Rat).